The sequence spans 253 residues: Phycoerythrobilin:ferredoxin oxidoreductase (253 aa).

It belongs to the HY2 family.

It carries out the reaction (3Z)-phycoerythrobilin + oxidized 2[4Fe-4S]-[ferredoxin] = 15,16-dihydrobiliverdin + reduced 2[4Fe-4S]-[ferredoxin] + 2 H(+). Functionally, catalyzes the two-electron reduction of the C2 and C3(1) diene system of 15,16-dihydrobiliverdin. The protein is Phycoerythrobilin:ferredoxin oxidoreductase of Prochlorococcus marinus (strain MIT 9301).